A 301-amino-acid chain; its full sequence is MTRHGKNCTAGAVYTYHEKKKDTAASGYGTQNIRLSRDAVKDFDCCCLSLQPCHDPVVTPDGYLYEREAILEYILHQKREIARQVKAYEKQRGARREEQKELQRAAAQDQVRGFLEKEAAIVSRPLNPFMPKAATLPNTEGEQPGPSVGPVGKDKDKALPSFWIPSLTPEAKATKLEKPSRTVTCPMSGKPLRMSDLTSVRFTQLDDSVDRVGLITRSERYVCAVTRDSLSNATPCAVLRPSGAVVTLECVEKLIRKDMVDPVNGDTLTERDIIVLQRGGTGFAGSGVKLQAEMSRPVMQA.

Serine 36 carries the phosphoserine modification. Positions 55–75 (DPVVTPDGYLYEREAILEYIL) are U-box-like. Positions 78–101 (KREIARQVKAYEKQRGARREEQKE) match the Nuclear localization signal motif. A disordered region spans residues 131-154 (PKAATLPNTEGEQPGPSVGPVGKD).

This sequence belongs to the NOSIP family. In terms of assembly, interacts with NOS1 and NOS3. Interacts with PP2A holoenzyme, containing PPP2CA, PPP2CB, PPP2R1A and PPP2R2A subunits.

It localises to the cytoplasm. The protein resides in the nucleus. The catalysed reaction is S-ubiquitinyl-[E2 ubiquitin-conjugating enzyme]-L-cysteine + [acceptor protein]-L-lysine = [E2 ubiquitin-conjugating enzyme]-L-cysteine + N(6)-ubiquitinyl-[acceptor protein]-L-lysine.. It participates in protein modification; protein ubiquitination. E3 ubiquitin-protein ligase that is essential for proper development of the forebrain, the eye and the face. Catalyzes monoubiquitination of serine/threonine-protein phosphatase 2A (PP2A) catalytic subunit PPP2CA/PPP2CB. Negatively regulates nitric oxide production by inducing NOS1 and NOS3 translocation to actin cytoskeleton and inhibiting their enzymatic activity. The sequence is that of Nitric oxide synthase-interacting protein (Nosip) from Mus musculus (Mouse).